A 292-amino-acid chain; its full sequence is Geranyl diphosphate 2-C-methyltransferase (292 aa).

The protein belongs to the geranyl diphosphate 2-C-methyltransferase family. Mg(2+) serves as cofactor.

The catalysed reaction is (2E)-geranyl diphosphate + S-adenosyl-L-methionine = (E)-2-methylgeranyl diphosphate + S-adenosyl-L-homocysteine + H(+). Catalyzes the SAM-dependent methylation of geranyl diphosphate (GPP) to yield (E)-2-methylgeranyl diphosphate (2-MeGPP). The polypeptide is Geranyl diphosphate 2-C-methyltransferase (Streptomyces coelicolor (strain ATCC BAA-471 / A3(2) / M145)).